Reading from the N-terminus, the 905-residue chain is NADH-quinone oxidoreductase subunit G (905 aa).

The 2Fe-2S ferredoxin-type domain occupies M1–E83. Residues C34, C45, C48, and C67 each contribute to the [2Fe-2S] cluster site. Residues E83–G122 enclose the 4Fe-4S His(Cys)3-ligated-type domain. 12 residues coordinate [4Fe-4S] cluster: H99, C103, C106, C112, C151, C154, C157, C201, C228, C231, C235, and C263. The 4Fe-4S Mo/W bis-MGD-type domain maps to M221–D277.

Belongs to the complex I 75 kDa subunit family. Composed of 13 different subunits. Subunits NuoCD, E, F, and G constitute the peripheral sector of the complex. The cofactor is [2Fe-2S] cluster. [4Fe-4S] cluster is required as a cofactor.

It carries out the reaction a quinone + NADH + 5 H(+)(in) = a quinol + NAD(+) + 4 H(+)(out). In terms of biological role, NDH-1 shuttles electrons from NADH, via FMN and iron-sulfur (Fe-S) centers, to quinones in the respiratory chain. The immediate electron acceptor for the enzyme in this species is believed to be ubiquinone. Couples the redox reaction to proton translocation (for every two electrons transferred, four hydrogen ions are translocated across the cytoplasmic membrane), and thus conserves the redox energy in a proton gradient. This is NADH-quinone oxidoreductase subunit G (nuoG) from Pseudomonas aeruginosa (strain ATCC 15692 / DSM 22644 / CIP 104116 / JCM 14847 / LMG 12228 / 1C / PRS 101 / PAO1).